Consider the following 141-residue polypeptide: Hemoglobin subunit alpha (141 aa).

Residues 1 to 141 (VLSSADKTNI…VSTVLTSKYR (141 aa)) form the Globin domain. Ser-3 bears the Phosphoserine mark. Lys-7 carries the post-translational modification N6-succinyllysine. Thr-8 carries the post-translational modification Phosphothreonine. Lys-11 carries the post-translational modification N6-succinyllysine. An N6-acetyllysine; alternate modification is found at Lys-16. Lys-16 carries the post-translational modification N6-succinyllysine; alternate. Residue Tyr-24 is modified to Phosphotyrosine. At Ser-35 the chain carries Phosphoserine. At Lys-40 the chain carries N6-succinyllysine. Position 49 is a phosphoserine (Ser-49). His-58 contacts O2. Residue His-87 coordinates heme b. Position 102 is a phosphoserine (Ser-102). A Phosphothreonine modification is found at Thr-108. Phosphoserine occurs at positions 124 and 131. Phosphothreonine occurs at positions 134 and 137. A Phosphoserine modification is found at Ser-138.

This sequence belongs to the globin family. As to quaternary structure, heterotetramer of two alpha chains and two beta chains. In terms of tissue distribution, red blood cells.

Functionally, involved in oxygen transport from the lung to the various peripheral tissues. In terms of biological role, hemopressin acts as an antagonist peptide of the cannabinoid receptor CNR1. Hemopressin-binding efficiently blocks cannabinoid receptor CNR1 and subsequent signaling. The sequence is that of Hemoglobin subunit alpha (HBA) from Rousettus aegyptiacus (Egyptian fruit bat).